A 415-amino-acid chain; its full sequence is Sucrose permease (415 aa).

Residues 1–16 (MALNIPFRNAYYRFAS) are Cytoplasmic-facing. A helical membrane pass occupies residues 17–37 (SYSFLFFISWSLWWSLYAIWL). Residues 38–48 (KGHLGLTGTEL) are Periplasmic-facing. The helical transmembrane segment at 49–69 (GTLYSVNQFTSILFMMFYGIV) threads the bilayer. Topologically, residues 70 to 77 (QDKLGLKK) are cytoplasmic. The helical transmembrane segment at 78 to 98 (PLIWCMSFILVLTGPFMIYVY) threads the bilayer. Topologically, residues 99-107 (EPLLQSNFS) are periplasmic. Residues 108–128 (VGLILGALFFGLGYLAGCGLL) traverse the membrane as a helical segment. Topologically, residues 129–147 (DSFTEKMARNFHFEYGTAR) are cytoplasmic. Residues 148 to 167 (AWGSFGYAIGAFFAGIFFSI) traverse the membrane as a helical segment. At 168–170 (SPH) the chain is on the periplasmic side. Residues 171-190 (INFWLVSLFGAVFMMINMRF) traverse the membrane as a helical segment. Over 191–220 (KDKDHQCIAADAGGVKKEDFIAVFKDRNFW) the chain is Cytoplasmic. The helical transmembrane segment at 221 to 241 (VFVIFIVGTWSFYNIFDQQLF) threads the bilayer. The Periplasmic segment spans residues 242 to 260 (PVFYAGLFESHDVGTRLYG). A helical transmembrane segment spans residues 261-281 (YLNSFQVVLEALCMAIIPFFV). Residues 282–287 (NRVGPK) lie on the Cytoplasmic side of the membrane. The chain crosses the membrane as a helical span at residues 288–308 (NALLIGVVIMALRILSCALFV). Topologically, residues 309–311 (NPW) are periplasmic. The helical transmembrane segment at 312–332 (IISLVKLLHAIEVPLCVISVF) threads the bilayer. The Cytoplasmic portion of the chain corresponds to 333-342 (KYSVANFDKR). Residues 343-363 (LSSTIFLIGFQIASSLGIVLL) traverse the membrane as a helical segment. The Periplasmic portion of the chain corresponds to 364–377 (STPTGILFDHAGYQ). Residues 378-398 (TVFFAISGIVCLMLLFGIFFL) traverse the membrane as a helical segment. Residues 399-415 (SKKREQIVMETPVPSAI) lie on the Cytoplasmic side of the membrane.

This sequence belongs to the major facilitator superfamily. Oligosaccharide:H(+) symporter (OHS) (TC 2.A.1.5) family.

It is found in the cell inner membrane. Its pathway is glycan biosynthesis; sucrose metabolism. Its function is as follows. Responsible for transport of sucrose into the cell, with the concomitant import of a proton (symport system). Can also transport maltose, fructose or lactulose, but not glucose, lactose or melibiose. The substrate specificity is directed toward the fructofuranosyl moiety of the substrate. The sequence is that of Sucrose permease from Escherichia coli.